The following is a 409-amino-acid chain: Multifunctional CCA protein (409 aa).

ATP-binding residues include G8 and R11. CTP contacts are provided by G8 and R11. Residues D21 and D23 each coordinate Mg(2+). 3 residues coordinate ATP: R91, R137, and R140. The CTP site is built by R91, R137, and R140. An HD domain is found at 228 to 329 (TGIHTLMVVE…ITLMDQNDAW (102 aa)).

The protein belongs to the tRNA nucleotidyltransferase/poly(A) polymerase family. Bacterial CCA-adding enzyme type 1 subfamily. As to quaternary structure, monomer. Can also form homodimers and oligomers. Requires Mg(2+) as cofactor. Ni(2+) is required as a cofactor.

The enzyme catalyses a tRNA precursor + 2 CTP + ATP = a tRNA with a 3' CCA end + 3 diphosphate. It catalyses the reaction a tRNA with a 3' CCA end + 2 CTP + ATP = a tRNA with a 3' CCACCA end + 3 diphosphate. Catalyzes the addition and repair of the essential 3'-terminal CCA sequence in tRNAs without using a nucleic acid template. Adds these three nucleotides in the order of C, C, and A to the tRNA nucleotide-73, using CTP and ATP as substrates and producing inorganic pyrophosphate. tRNA 3'-terminal CCA addition is required both for tRNA processing and repair. Also involved in tRNA surveillance by mediating tandem CCA addition to generate a CCACCA at the 3' terminus of unstable tRNAs. While stable tRNAs receive only 3'-terminal CCA, unstable tRNAs are marked with CCACCA and rapidly degraded. The sequence is that of Multifunctional CCA protein from Psychromonas ingrahamii (strain DSM 17664 / CCUG 51855 / 37).